Reading from the N-terminus, the 180-residue chain is Small ribosomal subunit protein uS4 (180 aa).

Residues 102 to 174 enclose the S4 RNA-binding domain; sequence RRLQTMLVRK…PARKLEQKEE (73 aa). A disordered region spans residues 154 to 180; that stretch reads VPFSPLANPEHPARKLEQKEETNEESA. Residues 164 to 174 are compositionally biased toward basic and acidic residues; sequence HPARKLEQKEE.

The protein belongs to the universal ribosomal protein uS4 family. In terms of assembly, part of the 30S ribosomal subunit. Contacts protein S5. The interaction surface between S4 and S5 is involved in control of translational fidelity.

In terms of biological role, one of the primary rRNA binding proteins, it binds directly to 16S rRNA where it nucleates assembly of the body of the 30S subunit. Functionally, with S5 and S12 plays an important role in translational accuracy. The polypeptide is Small ribosomal subunit protein uS4 (Nanoarchaeum equitans (strain Kin4-M)).